The sequence spans 149 residues: Large ribosomal subunit protein uL11 (149 aa).

It belongs to the universal ribosomal protein uL11 family. Part of the ribosomal stalk of the 50S ribosomal subunit. Interacts with L10 and the large rRNA to form the base of the stalk. L10 forms an elongated spine to which L12 dimers bind in a sequential fashion forming a multimeric L10(L12)X complex. Post-translationally, one or more lysine residues are methylated.

Forms part of the ribosomal stalk which helps the ribosome interact with GTP-bound translation factors. The polypeptide is Large ribosomal subunit protein uL11 (Methylobacterium sp. (strain 4-46)).